The following is a 601-amino-acid chain: MSGRRNETAIRELVQSVSGNNLCADCSTRGVQWASWNLGIFLCLRCATIHRKLGTHVSKVKSISLDEWSNDQIEKMKHWGNINANRYWNPNPLSHPLPTNALSDEHVMEKYIRDKYERKLFLDENHSTNSKPPSLPPRTKSSSQSSPMASTSTSKSRYADSLSTLHDMGFSDDSVNTHALEETNGDVTRAIEKIVQHGSSKPQKPSTLTSTKSTIKLVSARLKKRNKNLSVHFEDGTKPGDAYEVTGDTRAASPTLNPFEQMMAMTNQGMSVSPGVETTSSPFFTAPVEPNQPLQPLRPSMTGPVPSSMGSEATLNMPSTYGIDSNLYTNSNSSSIVQNPLQPARTGPAAINYNYTTNYSVSSPSVTNPFFDVGSSTQNASLMGSTGYPSSANNVYYENSYQGVGTSMSDNYQLPDMSKLSLNEQPAAPSNSNSQYMNTSMPTLDSTNMYGQSNQDPYSMSNGVYGSNYSAQPSTMQMQATGIAPPQPNMSMQMPMSMQSTGYQMPMENTWVDYNGMSQQGNGMQPATMNYSNSMGYDTNVPADNGYYQQGYGNVMMPPDASYTGTGSYVQPMNQPSGGMGAPADSSKADSYIQRIMQGKQ.

The region spanning 7–129 (ETAIRELVQS…LFLDENHSTN (123 aa)) is the Arf-GAP domain. Disordered stretches follow at residues 123–158 (DENHSTNSKPPSLPPRTKSSSQSSPMASTSTSKSRY) and 289–310 (EPNQPLQPLRPSMTGPVPSSMG). Over residues 139–156 (TKSSSQSSPMASTSTSKS) the composition is skewed to low complexity. The UBA domain maps to 157-197 (RYADSLSTLHDMGFSDDSVNTHALEETNGDVTRAIEKIVQH).

In Schizosaccharomyces pombe (strain 972 / ATCC 24843) (Fission yeast), this protein is UBA domain-containing protein 3 (ucp3).